We begin with the raw amino-acid sequence, 424 residues long: CinA-like protein (424 aa).

It belongs to the CinA family.

This Shewanella piezotolerans (strain WP3 / JCM 13877) protein is CinA-like protein.